Here is a 127-residue protein sequence, read N- to C-terminus: Fluoride-specific ion channel FluC (127 aa).

A run of 4 helical transmembrane segments spans residues 4-24 (LLLA…LLSM), 35-55 (LGTL…FAWF), 71-91 (TGFC…VFLL), and 103-123 (VFVN…LFSA). 2 residues coordinate Na(+): Gly-75 and Thr-78.

Belongs to the fluoride channel Fluc/FEX (TC 1.A.43) family.

It is found in the cell inner membrane. It carries out the reaction fluoride(in) = fluoride(out). With respect to regulation, na(+) is not transported, but it plays an essential structural role and its presence is essential for fluoride channel function. Functionally, fluoride-specific ion channel. Important for reducing fluoride concentration in the cell, thus reducing its toxicity. The protein is Fluoride-specific ion channel FluC of Escherichia coli O7:K1 (strain IAI39 / ExPEC).